We begin with the raw amino-acid sequence, 553 residues long: uncharacterized protein (553 aa).

The region spanning 26–109 (RFEFVGWGSR…YDLLEKHYKE (84 aa)) is the SWIB/MDM2 domain. The 126-residue stretch at 150–275 (AIVSDNIKLL…KAKKLHKDQT (126 aa)) folds into the Plus3 domain. 2 disordered regions span residues 335 to 357 (QNPEVSSPEAHKSDNEQRLSESP) and 447 to 482 (PVNNVDNGSQVQPNPSEVIELSDDDEDDNGDGETLD). Over residues 343–353 (EAHKSDNEQRL) the composition is skewed to basic and acidic residues. Over residues 447–461 (PVNNVDNGSQVQPNP) the composition is skewed to polar residues. Residues 466–480 (ELSDDDEDDNGDGET) show a composition bias toward acidic residues. The GYF domain occupies 497–551 (KLNWLYKDPQGLVQGPFSLTQLKAWSDAEYFTKQFRVWMTGESMESAVLLTDVLR).

This is an uncharacterized protein from Arabidopsis thaliana (Mouse-ear cress).